The chain runs to 31 residues: Relaxin B chain (31 aa).

Gln-1 bears the Pyrrolidone carboxylic acid mark.

It belongs to the insulin family. As to quaternary structure, heterodimer of a B chain and an A chain linked by two disulfide bonds.

It localises to the secreted. Functionally, relaxin is an ovarian hormone that acts with estrogen to produce dilatation of the birth canal in many mammals. This Phocoenoides dalli dalli (Dall's porpoise) protein is Relaxin B chain.